The sequence spans 126 residues: Small ribosomal subunit protein uS12 (126 aa).

The interval 1 to 28 is disordered; sequence MPTINQLVRKGRRKVRTKSKSPALDGNP. The span at 9–19 shows a compositional bias: basic residues; the sequence is RKGRRKVRTKS. Aspartate 89 carries the 3-methylthioaspartic acid modification. The segment at 106 to 126 is disordered; that stretch reads GVEKRRRSRSKYGVKRPKAAK. Residues 109–126 are compositionally biased toward basic residues; the sequence is KRRRSRSKYGVKRPKAAK.

It belongs to the universal ribosomal protein uS12 family. Part of the 30S ribosomal subunit. Contacts proteins S8 and S17. May interact with IF1 in the 30S initiation complex.

With S4 and S5 plays an important role in translational accuracy. Its function is as follows. Interacts with and stabilizes bases of the 16S rRNA that are involved in tRNA selection in the A site and with the mRNA backbone. Located at the interface of the 30S and 50S subunits, it traverses the body of the 30S subunit contacting proteins on the other side and probably holding the rRNA structure together. The combined cluster of proteins S8, S12 and S17 appears to hold together the shoulder and platform of the 30S subunit. The protein is Small ribosomal subunit protein uS12 of Opitutus terrae (strain DSM 11246 / JCM 15787 / PB90-1).